Here is a 95-residue protein sequence, read N- to C-terminus: Small ubiquitin-related modifier 2 (95 aa).

Lys-11 participates in a covalent cross-link: Glycyl lysine isopeptide (Lys-Gly) (interchain with G-Cter in SUMO). In terms of domain architecture, Ubiquitin-like spans 16 to 95; that stretch reads DHINLKVAGQ…VFQQQTGGSF (80 aa). Residue Gly-93 forms a Glycyl lysine isopeptide (Gly-Lys) (interchain with K-? in acceptor proteins) linkage. A propeptide spanning residues 94–95 is cleaved from the precursor; it reads SF.

This sequence belongs to the ubiquitin family. SUMO subfamily. Interacts with sae2 and ube2i. Covalently attached to a number of proteins, including top2. Post-translationally, polymeric chains can be formed through Lys-11 cross-linking. In terms of processing, cleavage of precursor form by a sentrin-specific protease is necessary for function.

It is found in the nucleus. Ubiquitin-like protein that can be covalently attached to proteins as a monomer or as a lysine-linked polymer. Covalent attachment via an isopeptide bond to its substrates requires prior activation by the E1 complex sae1-sae2 and linkage to the E2 enzyme ube2i, and can be promoted by an E3 ligase such as pias1-4. This post-translational modification on lysine residues of proteins plays a crucial role in a number of cellular processes such as nuclear transport, DNA replication and repair, mitosis and signal transduction. Polymeric sumo2 chains are also susceptible to polyubiquitination which functions as a signal for proteasomal degradation of modified proteins. The sequence is that of Small ubiquitin-related modifier 2 (sumo2) from Xenopus tropicalis (Western clawed frog).